Here is a 615-residue protein sequence, read N- to C-terminus: Medium-chain acyl-CoA ligase ACSF2, mitochondrial (615 aa).

A mitochondrion-targeting transit peptide spans 1 to 41 (MAVYVGMLRLGRLCAGSSGVLGARAALSRSWQEARLQGVRF). K179 carries the N6-acetyllysine modification. An N6-acetyllysine; alternate modification is found at K182. An N6-succinyllysine; alternate modification is found at K182. 263 to 271 (TSGTTGSPK) is an ATP binding site. 2 positions are modified to N6-acetyllysine: K340 and K398. K478 is modified (N6-succinyllysine). Residues D493 and R508 each coordinate ATP. Position 510 is an N6-acetyllysine (K510). N6-acetyllysine; alternate is present on residues K544 and K570. N6-succinyllysine; alternate occurs at positions 544 and 570. K599 lines the ATP pocket. K599 is subject to N6-succinyllysine.

It belongs to the ATP-dependent AMP-binding enzyme family.

It is found in the mitochondrion. The catalysed reaction is a medium-chain fatty acid + ATP + CoA = a medium-chain fatty acyl-CoA + AMP + diphosphate. The enzyme catalyses octanoate + ATP + CoA = octanoyl-CoA + AMP + diphosphate. In terms of biological role, acyl-CoA synthases catalyze the initial reaction in fatty acid metabolism, by forming a thioester with CoA. Has some preference toward medium-chain substrates. Plays a role in adipocyte differentiation. This Homo sapiens (Human) protein is Medium-chain acyl-CoA ligase ACSF2, mitochondrial.